The primary structure comprises 444 residues: Methylenetetrahydrofolate--tRNA-(uracil-5-)-methyltransferase TrmFO (444 aa).

Residue 9-14 (GAGMAG) coordinates FAD.

The protein belongs to the MnmG family. TrmFO subfamily. FAD serves as cofactor.

Its subcellular location is the cytoplasm. The enzyme catalyses uridine(54) in tRNA + (6R)-5,10-methylene-5,6,7,8-tetrahydrofolate + NADH + H(+) = 5-methyluridine(54) in tRNA + (6S)-5,6,7,8-tetrahydrofolate + NAD(+). It catalyses the reaction uridine(54) in tRNA + (6R)-5,10-methylene-5,6,7,8-tetrahydrofolate + NADPH + H(+) = 5-methyluridine(54) in tRNA + (6S)-5,6,7,8-tetrahydrofolate + NADP(+). In terms of biological role, catalyzes the folate-dependent formation of 5-methyl-uridine at position 54 (M-5-U54) in all tRNAs. The sequence is that of Methylenetetrahydrofolate--tRNA-(uracil-5-)-methyltransferase TrmFO from Cereibacter sphaeroides (strain ATCC 17023 / DSM 158 / JCM 6121 / CCUG 31486 / LMG 2827 / NBRC 12203 / NCIMB 8253 / ATH 2.4.1.) (Rhodobacter sphaeroides).